Reading from the N-terminus, the 983-residue chain is Ephrin type-A receptor 3 (983 aa).

Residues 1–20 (MDCHLSILVLLGCCVLSCSG) form the signal peptide. Residues 21 to 540 (ELSPQPSNEV…SFSISGENSH (520 aa)) are Extracellular-facing. Residues 29 to 206 (EVNLLDSKTI…YFKKCPFTVK (178 aa)) form the Eph LBD domain. Residues Asn231, Asn336, Asn390, Asn403, and Asn492 are each glycosylated (N-linked (GlcNAc...) asparagine). 2 Fibronectin type-III domains span residues 324 to 434 (PPSA…TNQA) and 435 to 530 (APSP…TSPD). A helical transmembrane segment spans residues 541-564 (VVMIAISAAVAIIVLTVVTYVLVG). The Cytoplasmic segment spans residues 565–983 (RFCGYHKSKH…TQSKNGPVPV (419 aa)). Phosphotyrosine; by autocatalysis is present on residues Tyr596 and Tyr602. A Protein kinase domain is found at 621–882 (ISIDKVVGAG…QIVSILDKLI (262 aa)). Residues 628 to 633 (GAGEFG), Lys653, and 700 to 706 (EYMENGS) contribute to the ATP site. Tyr701 is subject to Phosphotyrosine; by autocatalysis. Asp746 acts as the Proton acceptor in catalysis. An ATP-binding site is contributed by 750–751 (RN). Position 779 is a phosphotyrosine; by autocatalysis (Tyr779). Residues 911–975 (ATFHTTGDWL…ISTIKALETQ (65 aa)) form the SAM domain. Position 937 is a phosphotyrosine (Tyr937). Positions 981–983 (VPV) match the PDZ-binding motif.

Belongs to the protein kinase superfamily. Tyr protein kinase family. Ephrin receptor subfamily. Heterotetramer upon binding of the ligand. The heterotetramer is composed of an ephrin dimer and a receptor dimer. Oligomerization is probably required to induce biological responses. Forms a ternary EFNA5-EPHA3-ADAM10 complex mediating EFNA5 extracellular domain shedding by ADAM10 which regulates the EFNA5-EPHA3 complex internalization and function. Interacts (phosphorylated) with PTPN1; dephosphorylates EPHA3 and may regulate its trafficking and function. Interacts (phosphorylated) with CRK; mediates EFNA5-EPHA3 signaling through RHOA GTPase activation. Interacts with NCK1 (via SH2 domain); mediates EFNA5-EPHA3 signaling. In terms of processing, autophosphorylates upon activation by EFNA5. Phosphorylation on Tyr-602 mediates interaction with NCK1. Dephosphorylated by PTPN1. Greatest levels of expression occurring in the brain, also detected in testis. Expressed in myogenic progenitor cells.

Its subcellular location is the cell membrane. It is found in the secreted. It carries out the reaction L-tyrosyl-[protein] + ATP = O-phospho-L-tyrosyl-[protein] + ADP + H(+). Receptor tyrosine kinase which binds promiscuously membrane-bound ephrin family ligands residing on adjacent cells, leading to contact-dependent bidirectional signaling into neighboring cells. The signaling pathway downstream of the receptor is referred to as forward signaling while the signaling pathway downstream of the ephrin ligand is referred to as reverse signaling. Highly promiscuous for ephrin-A ligands it binds preferentially EFNA5. Upon activation by EFNA5 regulates cell-cell adhesion, cytoskeletal organization and cell migration. Plays a role in cardiac cells migration and differentiation and regulates the formation of the atrioventricular canal and septum during development probably through activation by EFNA1. Involved in the retinotectal mapping of neurons. May also control the segregation but not the guidance of motor and sensory axons during neuromuscular circuit development. The chain is Ephrin type-A receptor 3 (Epha3) from Mus musculus (Mouse).